We begin with the raw amino-acid sequence, 287 residues long: Beta-lactamase GES-2 (287 aa).

Positions 1–18 are cleaved as a signal peptide; that stretch reads MRFIHALLLAGIAHSAYA. A disulfide bridge connects residues cysteine 63 and cysteine 233. The Nucleophile; acyl-ester intermediate role is filled by serine 64. Residues lysine 67, serine 125, and glutamate 161 each contribute to the a beta-lactam site.

It belongs to the class-A beta-lactamase family.

It carries out the reaction a beta-lactam + H2O = a substituted beta-amino acid. Its activity is regulated as follows. Inhibited by the beta-lactamase-blocking agents clavulanic acid, sulbactam and tazobactam. Its function is as follows. Extended-spectrum beta-lactamase (ESBL) which confers resistance to penicillins, as well as first, third and fourth-generation cephalosporins. Has modest carbapenem-hydrolyzing activity. Has cefotaxime-hydrolyzing activity. This is Beta-lactamase GES-2 from Pseudomonas aeruginosa.